The sequence spans 471 residues: Ribulose bisphosphate carboxylase large chain (471 aa).

Residues 1 to 2 constitute a propeptide that is removed on maturation; that stretch reads MS. Pro3 carries the N-acetylproline modification. The residue at position 14 (Lys14) is an N6,N6,N6-trimethyllysine. Residues Asn123 and Thr173 each coordinate substrate. The active-site Proton acceptor is Lys175. Position 177 (Lys177) interacts with substrate. Residues Lys201, Asp203, and Glu204 each contribute to the Mg(2+) site. Residue Lys201 is modified to N6-carboxylysine. The active-site Proton acceptor is the His294. Arg295, His327, and Ser379 together coordinate substrate.

Belongs to the RuBisCO large chain family. Type I subfamily. Heterohexadecamer of 8 large chains and 8 small chains; disulfide-linked. The disulfide link is formed within the large subunit homodimers. The cofactor is Mg(2+). The disulfide bond which can form in the large chain dimeric partners within the hexadecamer appears to be associated with oxidative stress and protein turnover.

Its subcellular location is the plastid. It is found in the chloroplast. The catalysed reaction is 2 (2R)-3-phosphoglycerate + 2 H(+) = D-ribulose 1,5-bisphosphate + CO2 + H2O. It catalyses the reaction D-ribulose 1,5-bisphosphate + O2 = 2-phosphoglycolate + (2R)-3-phosphoglycerate + 2 H(+). RuBisCO catalyzes two reactions: the carboxylation of D-ribulose 1,5-bisphosphate, the primary event in carbon dioxide fixation, as well as the oxidative fragmentation of the pentose substrate in the photorespiration process. Both reactions occur simultaneously and in competition at the same active site. This chain is Ribulose bisphosphate carboxylase large chain, found in Drymophloeus subdistichus (Palm tree).